A 193-amino-acid polypeptide reads, in one-letter code: Peptidyl-tRNA hydrolase (193 aa).

Y15 provides a ligand contact to tRNA. H20 acts as the Proton acceptor in catalysis. F65, N67, and N113 together coordinate tRNA.

This sequence belongs to the PTH family. As to quaternary structure, monomer.

It is found in the cytoplasm. It catalyses the reaction an N-acyl-L-alpha-aminoacyl-tRNA + H2O = an N-acyl-L-amino acid + a tRNA + H(+). Its function is as follows. Hydrolyzes ribosome-free peptidyl-tRNAs (with 1 or more amino acids incorporated), which drop off the ribosome during protein synthesis, or as a result of ribosome stalling. Catalyzes the release of premature peptidyl moieties from peptidyl-tRNA molecules trapped in stalled 50S ribosomal subunits, and thus maintains levels of free tRNAs and 50S ribosomes. The protein is Peptidyl-tRNA hydrolase of Ehrlichia ruminantium (strain Welgevonden).